The primary structure comprises 124 residues: Large ribosomal subunit protein uL18 (124 aa).

Belongs to the universal ribosomal protein uL18 family. Part of the 50S ribosomal subunit; part of the 5S rRNA/L5/L18/L25 subcomplex. Contacts the 5S and 23S rRNAs.

In terms of biological role, this is one of the proteins that bind and probably mediate the attachment of the 5S RNA into the large ribosomal subunit, where it forms part of the central protuberance. This Orientia tsutsugamushi (strain Ikeda) (Rickettsia tsutsugamushi) protein is Large ribosomal subunit protein uL18.